The chain runs to 329 residues: Minor capsid protein A1 (329 aa).

The protein resides in the virion. Functionally, minor capsid protein. In Escherichia coli (Bacteriophage Q-beta), this protein is Minor capsid protein A1.